The chain runs to 529 residues: Tyrosinase (529 aa).

Residues 1–18 (MLLAALCCLLWSFRTSAG) form the signal peptide. Residues 19–472 (HFPRACASSK…IKPFLEQASR (454 aa)) are Lumenal-facing. N-linked (GlcNAc...) asparagine glycosylation is found at Asn86, Asn111, and Asn161. Residues His180, His202, and His211 each coordinate Cu cation. Residues Asn230 and Asn336 are each glycosylated (N-linked (GlcNAc...) asparagine). Cu cation contacts are provided by His362 and His366. An N-linked (GlcNAc...) asparagine glycan is attached at Asn370. Position 389 (His389) interacts with Cu cation. A helical transmembrane segment spans residues 473-495 (IWPWLIGAAVVGSVLTAVLGRLT). Topologically, residues 496–529 (SLLCRRKRKQLREERQPLLMEKEDYHSLLYQTHV) are cytoplasmic.

This sequence belongs to the tyrosinase family. As to quaternary structure, forms an OPN3-dependent complex with DCT in response to blue light in melanocytes. The cofactor is Cu(2+). Post-translationally, glycosylated.

The protein localises to the melanosome membrane. It is found in the melanosome. It carries out the reaction 2 L-dopa + O2 = 2 L-dopaquinone + 2 H2O. It catalyses the reaction L-tyrosine + O2 = L-dopaquinone + H2O. The enzyme catalyses 2 5,6-dihydroxyindole-2-carboxylate + O2 = 2 indole-5,6-quinone-2-carboxylate + 2 H2O. Its function is as follows. This is a copper-containing oxidase that functions in the formation of pigments such as melanins and other polyphenolic compounds. Catalyzes the initial and rate limiting step in the cascade of reactions leading to melanin production from tyrosine. In addition to hydroxylating tyrosine to DOPA (3,4-dihydroxyphenylalanine), also catalyzes the oxidation of DOPA to DOPA-quinone, and possibly the oxidation of DHI (5,6-dihydroxyindole) to indole-5,6 quinone. In Felis catus (Cat), this protein is Tyrosinase (TYR).